The chain runs to 117 residues: Large ribosomal subunit protein uL18 (117 aa).

Belongs to the universal ribosomal protein uL18 family. In terms of assembly, part of the 50S ribosomal subunit; part of the 5S rRNA/L5/L18/L25 subcomplex. Contacts the 5S and 23S rRNAs.

Functionally, this is one of the proteins that bind and probably mediate the attachment of the 5S RNA into the large ribosomal subunit, where it forms part of the central protuberance. This is Large ribosomal subunit protein uL18 from Pectobacterium carotovorum subsp. carotovorum (strain PC1).